The chain runs to 405 residues: Arginine biosynthesis bifunctional protein ArgJ (405 aa).

The substrate site is built by Thr152, Lys178, Thr189, Glu276, Asn400, and Thr405. The Nucleophile role is filled by Thr189.

It belongs to the ArgJ family. As to quaternary structure, heterotetramer of two alpha and two beta chains.

The protein localises to the cytoplasm. It catalyses the reaction N(2)-acetyl-L-ornithine + L-glutamate = N-acetyl-L-glutamate + L-ornithine. The catalysed reaction is L-glutamate + acetyl-CoA = N-acetyl-L-glutamate + CoA + H(+). It participates in amino-acid biosynthesis; L-arginine biosynthesis; L-ornithine and N-acetyl-L-glutamate from L-glutamate and N(2)-acetyl-L-ornithine (cyclic): step 1/1. The protein operates within amino-acid biosynthesis; L-arginine biosynthesis; N(2)-acetyl-L-ornithine from L-glutamate: step 1/4. Functionally, catalyzes two activities which are involved in the cyclic version of arginine biosynthesis: the synthesis of N-acetylglutamate from glutamate and acetyl-CoA as the acetyl donor, and of ornithine by transacetylation between N(2)-acetylornithine and glutamate. In Pseudomonas savastanoi pv. phaseolicola (strain 1448A / Race 6) (Pseudomonas syringae pv. phaseolicola (strain 1448A / Race 6)), this protein is Arginine biosynthesis bifunctional protein ArgJ.